Reading from the N-terminus, the 364-residue chain is Spermidine/putrescine import ATP-binding protein PotA (364 aa).

Residues Leu5–Ile235 enclose the ABC transporter domain. Gly37–Thr44 lines the ATP pocket.

Belongs to the ABC transporter superfamily. Spermidine/putrescine importer (TC 3.A.1.11.1) family. In terms of assembly, the complex is composed of two ATP-binding proteins (PotA), two transmembrane proteins (PotB and PotC) and a solute-binding protein (PotD).

The protein resides in the cell membrane. The enzyme catalyses ATP + H2O + polyamine-[polyamine-binding protein]Side 1 = ADP + phosphate + polyamineSide 2 + [polyamine-binding protein]Side 1.. Its function is as follows. Part of the ABC transporter complex PotABCD involved in spermidine/putrescine import. Responsible for energy coupling to the transport system. The polypeptide is Spermidine/putrescine import ATP-binding protein PotA (Staphylococcus saprophyticus subsp. saprophyticus (strain ATCC 15305 / DSM 20229 / NCIMB 8711 / NCTC 7292 / S-41)).